A 442-amino-acid chain; its full sequence is MDIYYILNHDNSDNNIFDFENNSDTIDIGKNYKKCNGQGQMLPPPTLITPSNQNDTITYYTDGRSISVPRKMLIDPNTIVDCGTNGIMFIAFNFETQKRVILKKLSKRMFDNELNGHRIIRNLIFQNLFQGGKHISTYQSIFKRKCSDSYQPPLTSILNSIISSNDNPQQHSTLIQQKDDEDFYFESIQPQYSLLNLISNNMLDQDDICQLFYEILMGLKFMHSAGVIHRDLDPENSIFVDENFNIKFTEFNNCFLLDTDPTFLFNKEYITNTYSYRAPETIWGDSLYTEATDVWGAGVLFAELLLGKRLFRSFNSKEHLKSIYKLIGAPKASEGAYVVKGELLFFLMEYNRKNSFQPTFNNTFIGCNQIQIDLLKNMLCWDPRDRYSVNEILESPYFENIHDRTNFIPCDKNLNVNIHFDILNLKPNQMTNLIDQEFLNPS.

Residues 74-398 form the Protein kinase domain; it reads IDPNTIVDCG…VNEILESPYF (325 aa). Residues 80-88 and lysine 103 contribute to the ATP site; that span reads VDCGTNGIM. Aspartate 231 (proton acceptor) is an active-site residue.

It belongs to the protein kinase superfamily. CMGC Ser/Thr protein kinase family. MAP kinase subfamily.

The catalysed reaction is L-seryl-[protein] + ATP = O-phospho-L-seryl-[protein] + ADP + H(+). The enzyme catalyses L-threonyl-[protein] + ATP = O-phospho-L-threonyl-[protein] + ADP + H(+). This Dictyostelium discoideum (Social amoeba) protein is Probable serine/threonine-protein kinase kinase DDB_G0280643.